Reading from the N-terminus, the 354-residue chain is Histidinol-phosphate aminotransferase (354 aa).

At Lys222 the chain carries N6-(pyridoxal phosphate)lysine.

The protein belongs to the class-II pyridoxal-phosphate-dependent aminotransferase family. Histidinol-phosphate aminotransferase subfamily. As to quaternary structure, homodimer. It depends on pyridoxal 5'-phosphate as a cofactor.

The catalysed reaction is L-histidinol phosphate + 2-oxoglutarate = 3-(imidazol-4-yl)-2-oxopropyl phosphate + L-glutamate. It participates in amino-acid biosynthesis; L-histidine biosynthesis; L-histidine from 5-phospho-alpha-D-ribose 1-diphosphate: step 7/9. This is Histidinol-phosphate aminotransferase from Staphylococcus carnosus (strain TM300).